Consider the following 324-residue polypeptide: Probable non-intrinsic ABC protein 5 (324 aa).

The 110-residue stretch at 2 to 111 folds into the ABC transporter domain; the sequence is DRERYDKVIE…ADLTLVMKDG (110 aa). 2 helical membrane-spanning segments follow: residues 212-232 and 259-279; these read YITLAYGGALVPFILLGQILF and LSTLMVVYVALAFGSSLCILV. Residues 222-324 enclose the ABC transmembrane type-1 domain; the sequence is VPFILLGQIL…TCSKTCIYSS (103 aa).

The protein belongs to the ABC transporter superfamily.

The protein localises to the membrane. The polypeptide is Probable non-intrinsic ABC protein 5 (NAP5) (Arabidopsis thaliana (Mouse-ear cress)).